The primary structure comprises 260 residues: Capsid protein (260 aa).

Residues 3 to 20 (KRPGDIIISTPVSKVRRR) carry the Bipartite nuclear localization signal motif. The Nuclear localization signal signature appears at 41-55 (KRRSWTYRPMYRKPR). Residues 69 to 86 (CEGPCKVQSYEQRDDIKH) fold into a zinc finger. The short motif at 102–123 (ITHRVGKRFCVKSIYFLGKVWM) is the Nuclear export signal element. The Bipartite nuclear localization signal signature appears at 202–251 (KRFFKINSHVTLFIFIQEAAKYENHTENALLLYMACTHASNPVYATMKIR).

This sequence belongs to the geminiviridae capsid protein family. Homomultimer. Binds to single-stranded and double-stranded viral DNA. Interacts (via nuclear localization signals) with host importin alpha-1a.

Its subcellular location is the virion. The protein resides in the host nucleus. Encapsidates the viral genome into characteristic twinned ('geminate') particles. Binds the genomic viral ssDNA and shuttles it into and out of the cell nucleus. Plays a role in protection of the genome from degradation, virus acquisition and transmission by insect vectors, infectivity, and systemic movement. The CP of monopartite geminiviruses is absolutely essential for virus movement. The sequence is that of Capsid protein from Cynanchum acutum (Little mallow).